Reading from the N-terminus, the 420-residue chain is 2',3'-cyclic-nucleotide 3'-phosphodiesterase (420 aa).

At Ser9 the chain carries Phosphoserine. The residue at position 110 (Tyr110) is a Phosphotyrosine. Ser169, Ser227, and Ser239 each carry phosphoserine. His250 functions as the Proton acceptor in the catalytic mechanism. Thr252 is a binding site for substrate. Thr262 bears the Phosphothreonine mark. The active-site Proton donor is the His329. Substrate is bound at residue Thr331. Phosphoserine is present on Ser358. Cys417 is subject to Cysteine methyl ester. A lipid anchor (S-farnesyl cysteine) is attached at Cys417. Positions 418–420 (TII) are cleaved as a propeptide — removed in mature form.

This sequence belongs to the 2H phosphoesterase superfamily. CNPase family. Exists as monomers and homodimers.

It is found in the membrane. Its subcellular location is the melanosome. It carries out the reaction a nucleoside 2',3'-cyclic phosphate + H2O = a nucleoside 2'-phosphate + H(+). In terms of biological role, catalyzes the formation of 2'-nucleotide products from 2',3'-cyclic substrates. May participate in RNA metabolism in the myelinating cell, CNP is the third most abundant protein in central nervous system myelin. This is 2',3'-cyclic-nucleotide 3'-phosphodiesterase from Rattus norvegicus (Rat).